Consider the following 253-residue polypeptide: Ubiquinone biosynthesis O-methyltransferase (253 aa).

R47, G78, D99, and M141 together coordinate S-adenosyl-L-methionine.

This sequence belongs to the methyltransferase superfamily. UbiG/COQ3 family.

The catalysed reaction is a 3-demethylubiquinol + S-adenosyl-L-methionine = a ubiquinol + S-adenosyl-L-homocysteine + H(+). It catalyses the reaction a 3-(all-trans-polyprenyl)benzene-1,2-diol + S-adenosyl-L-methionine = a 2-methoxy-6-(all-trans-polyprenyl)phenol + S-adenosyl-L-homocysteine + H(+). Its pathway is cofactor biosynthesis; ubiquinone biosynthesis. In terms of biological role, O-methyltransferase that catalyzes the 2 O-methylation steps in the ubiquinone biosynthetic pathway. The chain is Ubiquinone biosynthesis O-methyltransferase from Rhodopseudomonas palustris (strain ATCC BAA-98 / CGA009).